The following is a 462-amino-acid chain: N-myc proto-oncogene protein (462 aa).

The interaction with AURKA stretch occupies residues 19–47 (LEFDSLQPCFYPDEDDFYFGGPDSTPPGE). Residues 61 to 90 (LSPSRAFPEHSPEPSNWATEMLLPEADLWG) are interaction with AURKA and FBXW7. Residues 76–85 (NWATEMLLPE) carry the 9aaTAD motif. Disordered regions lie at residues 133–177 (EKLQ…ATLP), 232–290 (AAPA…SNNK), and 332–390 (APSP…LERQ). The segment covering 138–174 (GHGPPGASSSCPAPGVGASSSGGRALGGSASAGRTGA) has biased composition (low complexity). Acidic residues predominate over residues 257-276 (TLSDSDDEDDEEEDEEEEID). Residues Ser259 and Ser261 each carry the phosphoserine; by CK2 modification. Positions 379 to 431 (ERRRNHNILERQRRNDLRSSFLTLRDHVPELVKNEKAAKVVILKKATEYVHAL) constitute a bHLH domain. A leucine-zipper region spans residues 431–452 (LQANEHQLLLEKEKLQARQQQL).

Efficient DNA binding requires dimerization with another bHLH protein. Binds DNA as a heterodimer with MAX. Interacts with KDM5A, KDM5B and HUWE1. Interacts with MYCNOS. Interacts with AURKA; interaction is phospho-independent and triggers AURKA activation; AURKA competes with FBXW7 for binding to unphosphorylated MYCN but not for binding to unphosphorylated MYCN. Interacts with FBXW7; FBXW7 competes with AURKA for binding to unphosphorylated MYCN but not for binding to phosphorylated MYCN. Phosphorylated by GSK3-beta which may promote its degradation. Phosphorylated by AURKA.

It localises to the nucleus. In terms of biological role, positively regulates the transcription of MYCNOS in neuroblastoma cells. This Rattus norvegicus (Rat) protein is N-myc proto-oncogene protein (Mycn).